The sequence spans 562 residues: uncharacterized protein (562 aa).

Helical transmembrane passes span Ile10 to Gly27, Phe34 to Asp53, Ile63 to Ala85, Ala92 to Gly114, and Phe155 to Leu177. RCK C-terminal domains are found at residues Thr204–Ser288 and Asp290–Val377. 6 consecutive transmembrane segments (helical) span residues Val387–Val404, Gly408–Val430, Pro443–Gly465, Leu475–Val497, Phe504–Ile526, and Tyr539–Leu561.

The protein belongs to the AAE transporter (TC 2.A.81) family.

The protein resides in the cell membrane. This is an uncharacterized protein from Shewanella oneidensis (strain ATCC 700550 / JCM 31522 / CIP 106686 / LMG 19005 / NCIMB 14063 / MR-1).